The sequence spans 395 residues: MHC class I-like protein MILL1 (395 aa).

The first 32 residues, 1-32, serve as a signal peptide directing secretion; sequence MLLSRNLRALAAIHLWIVYLLLEDLLGTCAEG. The interval 57 to 148 is alpha-1; that stretch reads AVAEPHTLRY…ITAQNGQNTD (92 aa). Residues Asn98, Asn163, and Asn199 are each glycosylated (N-linked (GlcNAc...) asparagine). The segment at 149 to 240 is alpha-2; sequence LHILQATFGC…SLRNGLLNTG (92 aa). 2 cysteine pairs are disulfide-bonded: Cys158–Cys221 and Cys260–Cys317. Positions 241–337 are alpha-3; the sequence is FPKVIVTFRN…EPAATEAPVY (97 aa). Residues 242–333 form the Ig-like C1-type domain; it reads PKVIVTFRNY…HNINEPAATE (92 aa). Residues 332–352 are disordered; the sequence is TEAPVYGARREQPPTSGVGSR. The segment at 338–368 is connecting peptide; it reads GARREQPPTSGVGSRVGKSLWSAMTTALVVI. The GPI-anchor amidated serine moiety is linked to residue Ser369. Positions 370–395 are cleaved as a propeptide — removed in mature form; the sequence is WTLSQKLMGPLLWFCSGGFCSFLQCW.

The protein belongs to the MHC class I family. Heterodimer with B2M. N-glycosylated. As to expression, expressed in stomach, intestine, uterus, skeletal muscle and heart.

The protein localises to the cell membrane. This Mus musculus (Mouse) protein is MHC class I-like protein MILL1.